A 185-amino-acid polypeptide reads, in one-letter code: Ribosome-recycling factor (185 aa).

This sequence belongs to the RRF family.

It localises to the cytoplasm. Functionally, responsible for the release of ribosomes from messenger RNA at the termination of protein biosynthesis. May increase the efficiency of translation by recycling ribosomes from one round of translation to another. The polypeptide is Ribosome-recycling factor (Corynebacterium diphtheriae (strain ATCC 700971 / NCTC 13129 / Biotype gravis)).